Reading from the N-terminus, the 198-residue chain is Recombination protein RecR (198 aa).

A C4-type zinc finger spans residues 57–72 (CSVCGHITDQDPCAIC). A Toprim domain is found at 80–175 (SLICVVQDPK…RTTRIAHGLP (96 aa)).

This sequence belongs to the RecR family.

Its function is as follows. May play a role in DNA repair. It seems to be involved in an RecBC-independent recombinational process of DNA repair. It may act with RecF and RecO. This chain is Recombination protein RecR, found in Oceanobacillus iheyensis (strain DSM 14371 / CIP 107618 / JCM 11309 / KCTC 3954 / HTE831).